The following is a 234-amino-acid chain: Probable transcriptional regulatory protein Pfl01_3677 (234 aa).

The protein belongs to the TACO1 family.

The protein resides in the cytoplasm. The sequence is that of Probable transcriptional regulatory protein Pfl01_3677 from Pseudomonas fluorescens (strain Pf0-1).